A 66-amino-acid polypeptide reads, in one-letter code: LTCVTSKSIFGITTENCPDGQNLCFKKWYYLNHRYSDITWGCAATCPKPTNVRETIHCCETDKCNE.

4 cysteine pairs are disulfide-bonded: Cys3–Cys24, Cys17–Cys42, Cys46–Cys58, and Cys59–Cys64.

The protein belongs to the three-finger toxin family. Short-chain subfamily. Aminergic toxin sub-subfamily. As to expression, expressed by the venom gland.

It is found in the secreted. Selectively binds with high-affinity to the a2B-adrenoceptor subtype (ADRA2B). The toxin reversibly binds to ADRA2B, and its mode of inhibition is non-competitive. The toxin has also been described to bind with high affinity to all muscarinic receptor subtypes (Ki=23 nM (on CHRM1), Ki=44 nM (on CHRM2), Ki=3 nM (on CHRM3), Ki=5 nM (on CHRM4), and Ki=8 nM (on CHRM5)) but no other data support these affinity values. This is Muscarinic toxin alpha from Dendroaspis polylepis polylepis (Black mamba).